The sequence spans 953 residues: Homeobox protein LUMINIDEPENDENS (953 aa).

The homeobox DNA-binding region spans 63–123; sequence KIGKRPRDLL…VTQKTRVRKQ (61 aa). A disordered region spans residues 404 to 430; that stretch reads EQPGQKAAGKSPQTVRIGTSGRSRPMS. The segment covering 414–425 has biased composition (polar residues); the sequence is SPQTVRIGTSGR. Tandem repeats lie at residues 498-502, 507-511, 516-520, 525-529, and 534-538. Residues 498–538 are 5 X 5 AA repeats of Q-P-V-N-G; the sequence is QPVNGFSTIQPVNGPSAVQPVNGPLAVQPVNGPSALQPVNG. 3 disordered regions span residues 606 to 668, 733 to 763, and 861 to 953; these read NSKE…EPQD, APNS…NPGM, and VGQM…KRWR. Positions 608 to 623 are enriched in basic and acidic residues; it reads KEADVQRNRNRRERET. Low complexity predominate over residues 651 to 661; the sequence is PEIPSQQPPEE. Over residues 733 to 742 the composition is skewed to polar residues; the sequence is APNSSSSSNK. Residues 869-884 are compositionally biased toward low complexity; sequence SSSWRSQQSQNSYYSH. Composition is skewed to polar residues over residues 888–934 and 942–953; these read EIAS…QQQA and THPYWNQNKRWR.

As to quaternary structure, interacts with SUF4. In terms of tissue distribution, expressed in shoot apex, root apex, leaf primordia and floral buds.

It localises to the nucleus. Its function is as follows. Seems to play a role in the regulation of flowering time in the autonomous flowering pathway by repressing FLOWERING LOCUS C expression. This chain is Homeobox protein LUMINIDEPENDENS (LD), found in Arabidopsis thaliana (Mouse-ear cress).